Consider the following 877-residue polypeptide: Alanine--tRNA ligase (877 aa).

Residues His556, His560, Cys657, and His661 each contribute to the Zn(2+) site.

Belongs to the class-II aminoacyl-tRNA synthetase family. It depends on Zn(2+) as a cofactor.

It is found in the cytoplasm. The catalysed reaction is tRNA(Ala) + L-alanine + ATP = L-alanyl-tRNA(Ala) + AMP + diphosphate. Functionally, catalyzes the attachment of alanine to tRNA(Ala) in a two-step reaction: alanine is first activated by ATP to form Ala-AMP and then transferred to the acceptor end of tRNA(Ala). Also edits incorrectly charged Ser-tRNA(Ala) and Gly-tRNA(Ala) via its editing domain. This is Alanine--tRNA ligase from Wolbachia pipientis wMel.